The chain runs to 136 residues: Large ribosomal subunit protein uL16 (136 aa).

It belongs to the universal ribosomal protein uL16 family. As to quaternary structure, part of the 50S ribosomal subunit.

Binds 23S rRNA and is also seen to make contacts with the A and possibly P site tRNAs. The sequence is that of Large ribosomal subunit protein uL16 from Shewanella baltica (strain OS155 / ATCC BAA-1091).